The following is a 195-amino-acid chain: UPF0157 protein BH1888 (195 aa).

Polar residues predominate over residues 1–12 (MPPMKDSSNSTP). Residues 1-21 (MPPMKDSSNSTPRTDEELQEV) are disordered.

The protein belongs to the UPF0157 (GrpB) family.

This Halalkalibacterium halodurans (strain ATCC BAA-125 / DSM 18197 / FERM 7344 / JCM 9153 / C-125) (Bacillus halodurans) protein is UPF0157 protein BH1888.